Here is a 379-residue protein sequence, read N- to C-terminus: Citrate utilization protein B (379 aa).

Positions 28, 31, 34, 38, 62, 65, 68, and 72 each coordinate [4Fe-4S] cluster.

The sequence is that of Citrate utilization protein B (citB) from Escherichia coli.